A 128-amino-acid polypeptide reads, in one-letter code: Histone H2A (128 aa).

The interval 1-22 (MSGRGKTGGKARAKAKTRSSRA) is disordered. Ser-2 is subject to N-acetylserine. Ser-2 carries the post-translational modification Phosphoserine. Position 6 is an N6-(2-hydroxyisobutyryl)lysine (Lys-6). Lys-6 bears the N6-acetyllysine mark. A compositionally biased stretch (basic residues) spans 7–19 (TGGKARAKAKTRS). Position 10 is an N6-(2-hydroxyisobutyryl)lysine; alternate (Lys-10). The residue at position 10 (Lys-10) is an N6-lactoyllysine; alternate. At Lys-10 the chain carries N6-succinyllysine. Residues Lys-14 and Lys-16 each participate in a glycyl lysine isopeptide (Lys-Gly) (interchain with G-Cter in ubiquitin) cross-link. Lys-37 is subject to N6-(2-hydroxyisobutyryl)lysine; alternate. Lys-75 and Lys-76 each carry N6-(2-hydroxyisobutyryl)lysine. Lys-96 is modified (N6-(2-hydroxyisobutyryl)lysine; alternate). N6-succinyllysine is present on Lys-96. An N6-glutaryllysine; alternate modification is found at Lys-96. N5-methylglutamine is present on Gln-105. Residue Lys-119 is modified to N6-(2-hydroxyisobutyryl)lysine; alternate. 3 positions are modified to N6-glutaryllysine; alternate: Lys-119, Lys-120, and Lys-126. A Glycyl lysine isopeptide (Lys-Gly) (interchain with G-Cter in ubiquitin) cross-link involves residue Lys-120.

As to quaternary structure, the nucleosome is a histone octamer containing two molecules each of H2A, H2B, H3 and H4 assembled in one H3-H4 heterotetramer and two H2A-H2B heterodimers. The octamer wraps approximately 147 bp of DNA. In terms of processing, monoubiquitination of Lys-120 (H2AK119Ub) gives a specific tag for epigenetic transcriptional repression. Following DNA double-strand breaks (DSBs), it is ubiquitinated through 'Lys-63' linkage of ubiquitin moieties, leading to the recruitment of repair proteins to sites of DNA damage. H2AK119Ub and ionizing radiation-induced 'Lys-63'-linked ubiquitination are distinct events. Phosphorylation on Ser-2 is enhanced during mitosis. Phosphorylation on Ser-2 directly represses transcription. Post-translationally, glutamine methylation at Gln-105 (H2AQ104me) by FBL is specifically dedicated to polymerase I. It is present at 35S ribosomal DNA locus and impairs binding of the FACT complex. Expressed and secreted by skin epithelium.

It is found in the nucleus. The protein localises to the chromosome. In terms of biological role, core component of nucleosome. Nucleosomes wrap and compact DNA into chromatin, limiting DNA accessibility to the cellular machineries which require DNA as a template. Histones thereby play a central role in transcription regulation, DNA repair, DNA replication and chromosomal stability. DNA accessibility is regulated via a complex set of post-translational modifications of histones, also called histone code, and nucleosome remodeling. Its function is as follows. The secreted form has antibacterial activity against Gram-positive bacteria and antifungal activity against S.cerevisiae. The polypeptide is Histone H2A (Oncorhynchus mykiss (Rainbow trout)).